Here is a 220-residue protein sequence, read N- to C-terminus: Dual specificity phosphatase 29 (220 aa).

Polar residues predominate over residues Met1 to Ser15. A disordered region spans residues Met1 to Glu29. The Tyrosine-protein phosphatase domain maps to His54–Gln202. Position 146 to 153 (His146 to Arg153) interacts with substrate. The Phosphocysteine intermediate role is filled by Cys147.

This sequence belongs to the protein-tyrosine phosphatase family. Non-receptor class dual specificity subfamily. Homodimer. Interacts with PRKAA2.

The protein localises to the cytoplasm. It is found in the nucleus. The enzyme catalyses O-phospho-L-tyrosyl-[protein] + H2O = L-tyrosyl-[protein] + phosphate. It catalyses the reaction O-phospho-L-seryl-[protein] + H2O = L-seryl-[protein] + phosphate. The catalysed reaction is O-phospho-L-threonyl-[protein] + H2O = L-threonyl-[protein] + phosphate. Dual specificity phosphatase able to dephosphorylate phosphotyrosine, phosphoserine and phosphothreonine residues within the same substrate, with a preference for phosphotyrosine as a substrate. Involved in the modulation of intracellular signaling cascades. In skeletal muscle regulates systemic glucose homeostasis by activating, AMPK, an energy sensor protein kinase. Affects MAP kinase signaling though modulation of the MAPK1/2 cascade in skeletal muscle promoting muscle cell differentiation, development and atrophy. This is Dual specificity phosphatase 29 from Homo sapiens (Human).